We begin with the raw amino-acid sequence, 448 residues long: Chromogranin-A (448 aa).

The N-terminal stretch at 1 to 18 (MRSAVVLALLLCAGQVIA) is a signal peptide. Residues cysteine 35 and cysteine 56 are joined by a disulfide bond. The disordered stretch occupies residues 116–251 (LKEVTEEALS…AFNPHPSLSY (136 aa)). 2 stretches are compositionally biased toward basic and acidic residues: residues 129–139 (AEARGDSKEVE) and 158–175 (QESR…KEAI). A Phosphoserine modification is found at serine 197. The segment covering 205–222 (VDREKGLGAERGQQAKRE) has biased composition (basic and acidic residues). The span at 223-238 (EEEDEAGEKADAEEEG) shows a compositional bias: acidic residues. Serine 258 and serine 288 each carry phosphoserine. A disordered region spans residues 263-429 (LVVDGARKTG…PEDQELESLS (167 aa)). Residue glycine 308 is modified to Glycine amide. The segment covering 310–350 (KSRELEQEKEQERLSKEWEDAKRWSKMDQLAKELTAEKRLE) has biased composition (basic and acidic residues). Phosphoserine is present on residues serine 311, serine 324, and serine 362. A Methionine sulfoxide modification is found at methionine 363. 4 positions are modified to phosphoserine: serine 389, serine 393, serine 415, and serine 429. Over residues 405-422 (YPEEKKEEEGSANRRPED) the composition is skewed to basic and acidic residues. Serine 415 carries O-linked (Xyl...) (chondroitin sulfate) serine glycosylation.

It belongs to the chromogranin/secretogranin protein family. As to quaternary structure, self-interacts; self-assembly is promoted in vitro by chondroitin sulfate attachment which occurs at mildly acidic pH conditions. Interacts with SCG3. Interacts with ITPR1 in the secretory granules. Post-translationally, O-glycosylated; contains chondroitin sulfate (CS). CS attachment is pH-dependent, being observed at mildly acidic conditions of pH 5 but not at neutral pH, and promotes self-assembly in vitro. As to expression, highly expressed in adrenal medulla and pituitary gland. Weaker expression detected in cerebrum, cerebellum, spinal cord, liver, thyroid gland, striated muscle, lung, spleen, kidney, parotid gland, and sublingual gland.

Its subcellular location is the secreted. The protein localises to the cytoplasmic vesicle. It is found in the secretory vesicle. It localises to the neuronal dense core vesicle. Strongly inhibits glucose induced insulin release from the pancreas. Functionally, inhibits catecholamine release from chromaffin cells and noradrenergic neurons by acting as a non-competitive nicotinic cholinergic antagonist. Can induce mast cell migration, degranulation and production of cytokines and chemokines. Its function is as follows. Regulates granule biogenesis in endocrine cells by up-regulating the transcription of protease nexin 1 (SERPINE2) via a cAMP-PKA-SP1 pathway. This leads to inhibition of granule protein degradation in the Golgi complex which in turn promotes granule formation. This is Chromogranin-A (CHGA) from Equus caballus (Horse).